The following is a 507-amino-acid chain: Histidine ammonia-lyase (507 aa).

The 5-imidazolinone (Ala-Gly) cross-link spans 141 to 143 (ASG). Serine 142 bears the 2,3-didehydroalanine (Ser) mark.

The protein belongs to the PAL/histidase family. Post-translationally, contains an active site 4-methylidene-imidazol-5-one (MIO), which is formed autocatalytically by cyclization and dehydration of residues Ala-Ser-Gly.

The protein localises to the cytoplasm. It carries out the reaction L-histidine = trans-urocanate + NH4(+). Its pathway is amino-acid degradation; L-histidine degradation into L-glutamate; N-formimidoyl-L-glutamate from L-histidine: step 1/3. In Burkholderia pseudomallei (strain 1106a), this protein is Histidine ammonia-lyase.